Consider the following 414-residue polypeptide: Isocitrate dehydrogenase [NADP] cytoplasmic (414 aa).

At Ser-2 the chain carries N-acetylserine. At Tyr-42 the chain carries Phosphotyrosine. Residue 75 to 77 participates in NADP(+) binding; the sequence is TIT. Thr-77 contacts substrate. At Lys-81 the chain carries N6-acetyllysine. Position 82 (Arg-82) interacts with NADP(+). Substrate-binding positions include 94 to 100 and Arg-109; that span reads SPNGTIR. Lys-126 carries the post-translational modification N6-succinyllysine. Residues Arg-132 and Lys-212 each contribute to the substrate site. N6-acetyllysine is present on residues Lys-224, Lys-233, and Lys-243. Position 252 (Asp-252) interacts with Mn(2+). An NADP(+)-binding site is contributed by Lys-260. The Mn(2+) site is built by Asp-275 and Asp-279. 310-315 provides a ligand contact to NADP(+); that stretch reads GTVTRH. Lys-321 bears the N6-acetyllysine mark. Asn-328 lines the NADP(+) pocket. Phosphoserine is present on Ser-389. At Lys-400 the chain carries N6-succinyllysine.

It belongs to the isocitrate and isopropylmalate dehydrogenases family. Homodimer. Requires Mg(2+) as cofactor. Mn(2+) serves as cofactor. In terms of processing, the N-terminus is blocked. Acetylation at Lys-374 dramatically reduces catalytic activity. In terms of tissue distribution, ubiquitous.

It is found in the cytoplasm. It localises to the cytosol. The protein localises to the peroxisome. The catalysed reaction is D-threo-isocitrate + NADP(+) = 2-oxoglutarate + CO2 + NADPH. In terms of biological role, catalyzes the NADP(+)-dependent oxidative decarboxylation of isocitrate (D-threo-isocitrate) to 2-ketoglutarate (2-oxoglutarate), which is required by other enzymes such as the phytanoyl-CoA dioxygenase. Plays a critical role in the generation of NADPH, an important cofactor in many biosynthesis pathways. May act as a corneal epithelial crystallin and may be involved in maintaining corneal epithelial transparency. The polypeptide is Isocitrate dehydrogenase [NADP] cytoplasmic (Idh1) (Rattus norvegicus (Rat)).